The sequence spans 201 residues: Inosine triphosphate pyrophosphatase (201 aa).

13-18 (TGNAKK) provides a ligand contact to ITP. Residue glutamate 43 coordinates Mg(2+). ITP contacts are provided by residues lysine 55, 71 to 72 (DT), lysine 88, 148 to 151 (FGWD), lysine 171, and 176 to 177 (HR).

It belongs to the HAM1 NTPase family. In terms of assembly, homodimer. The cofactor is Mg(2+). It depends on Mn(2+) as a cofactor.

It is found in the cytoplasm. It carries out the reaction ITP + H2O = IMP + diphosphate + H(+). The catalysed reaction is dITP + H2O = dIMP + diphosphate + H(+). It catalyses the reaction XTP + H2O = XMP + diphosphate + H(+). The enzyme catalyses N(6)-hydroxy-dATP + H2O = N(6)-hydroxy-dAMP + diphosphate + H(+). Pyrophosphatase that hydrolyzes the non-canonical purine nucleotides inosine triphosphate (ITP), deoxyinosine triphosphate (dITP) as well as 2'-deoxy-N-6-hydroxylaminopurine triphosphate (dHAPTP) and xanthosine 5'-triphosphate (XTP) to their respective monophosphate derivatives. The enzyme does not distinguish between the deoxy- and ribose forms. Probably excludes non-canonical purines from RNA and DNA precursor pools, thus preventing their incorporation into RNA and DNA and avoiding chromosomal lesions. The chain is Inosine triphosphate pyrophosphatase from Gallus gallus (Chicken).